Here is a 232-residue protein sequence, read N- to C-terminus: MAKTLSRSTASCVAKRFFSTSNAVASPSPLPSHLISRRFSPTIFHAVGYIPALTRFTTIRTRMDRSGGSYSPLKSGSNFSDRPPTEMAPLFPGCDYEHWLIVMEKPGGENAQKQQMIDCYVQTLAKIVGSEEEARKKIYNVSCERYFGFGCEIDEETSNKLEGLPGVLFVLPDSYVDPEFKDYGAELFVNGEVVPRPPERQRRMVELTNQRGSDKPKYHDRIRNVRRRENMR.

A mitochondrion-targeting transit peptide spans 1-67 (MAKTLSRSTA…TIRTRMDRSG (67 aa)). Residues 208-232 (TNQRGSDKPKYHDRIRNVRRRENMR) form a disordered region. The segment covering 212–232 (GSDKPKYHDRIRNVRRRENMR) has biased composition (basic and acidic residues).

Belongs to the MORF family. As to quaternary structure, heterodimers with MORF8/RIP1, MORF3/RIP3, MORF6/RIP6, MORF7/RIP7 and MORF9/RIP9.

The protein resides in the mitochondrion. Functionally, involved in organellar RNA editing. Required for the processing of few RNA editing sites in mitochondria. In Arabidopsis thaliana (Mouse-ear cress), this protein is Multiple organellar RNA editing factor 6, mitochondrial.